We begin with the raw amino-acid sequence, 290 residues long: Eukaryotic translation initiation factor 3 subunit F-2 (290 aa).

The MPN domain occupies Val-12–Gly-150.

Belongs to the eIF-3 subunit F family. Component of the eukaryotic translation initiation factor 3 (eIF-3) complex. The eIF-3 complex interacts with pix.

The protein localises to the cytoplasm. Its function is as follows. Component of the eukaryotic translation initiation factor 3 (eIF-3) complex, which is involved in protein synthesis of a specialized repertoire of mRNAs and, together with other initiation factors, stimulates binding of mRNA and methionyl-tRNAi to the 40S ribosome. The eIF-3 complex specifically targets and initiates translation of a subset of mRNAs involved in cell proliferation. The protein is Eukaryotic translation initiation factor 3 subunit F-2 of Drosophila mojavensis (Fruit fly).